The chain runs to 125 residues: Outer membrane protein assembly factor BamE (125 aa).

An N-terminal signal peptide occupies residues 1–17 (MNKTLILALSALLGLAA). C18 is lipidated: N-palmitoyl cysteine. C18 carries S-diacylglycerol cysteine lipidation.

This sequence belongs to the BamE family. As to quaternary structure, part of the Bam complex.

Its subcellular location is the cell outer membrane. Its function is as follows. Part of the outer membrane protein assembly complex, which is involved in assembly and insertion of beta-barrel proteins into the outer membrane. The chain is Outer membrane protein assembly factor BamE from Neisseria meningitidis serogroup B (strain ATCC BAA-335 / MC58).